The chain runs to 524 residues: Chromosomal replication initiator protein DnaA (524 aa).

A domain I, interacts with DnaA modulators region spans residues 1-105 (MSQNSSSLLE…EQEIPETPAQ (105 aa)). Positions 95 to 183 (PEQEIPETPA…PAHNPNREVS (89 aa)) are disordered. A domain II region spans residues 106–182 (QEFKYQPDAP…TPAHNPNREV (77 aa)). Residues 148–158 (APEPHPAPIAD) show a composition bias toward pro residues. Residues 183–399 (SLNPKYTFES…GALIRVSAYS (217 aa)) form a domain III, AAA+ region region. 4 residues coordinate ATP: G227, G229, K230, and T231. Residues 400 to 524 (SLINQPIDKE…TQLIKSRGRN (125 aa)) are domain IV, binds dsDNA.

Belongs to the DnaA family. In terms of assembly, oligomerizes as a right-handed, spiral filament on DNA at oriC.

The protein localises to the cytoplasm. Its function is as follows. Plays an essential role in the initiation and regulation of chromosomal replication. ATP-DnaA binds to the origin of replication (oriC) to initiate formation of the DNA replication initiation complex once per cell cycle. Binds the DnaA box (a 9 base pair repeat at the origin) and separates the double-stranded (ds)DNA. Forms a right-handed helical filament on oriC DNA; dsDNA binds to the exterior of the filament while single-stranded (ss)DNA is stabiized in the filament's interior. The ATP-DnaA-oriC complex binds and stabilizes one strand of the AT-rich DNA unwinding element (DUE), permitting loading of DNA polymerase. After initiation quickly degrades to an ADP-DnaA complex that is not apt for DNA replication. Binds acidic phospholipids. This Corynebacterium glutamicum (strain R) protein is Chromosomal replication initiator protein DnaA.